Reading from the N-terminus, the 182-residue chain is ATP synthase subunit delta (182 aa).

Belongs to the ATPase delta chain family. As to quaternary structure, F-type ATPases have 2 components, F(1) - the catalytic core - and F(0) - the membrane proton channel. F(1) has five subunits: alpha(3), beta(3), gamma(1), delta(1), epsilon(1). CF(0) has four main subunits: a(1), b(1), b'(1) and c(10-14). The alpha and beta chains form an alternating ring which encloses part of the gamma chain. F(1) is attached to F(0) by a central stalk formed by the gamma and epsilon chains, while a peripheral stalk is formed by the delta, b and b' chains.

The protein localises to the cellular thylakoid membrane. In terms of biological role, f(1)F(0) ATP synthase produces ATP from ADP in the presence of a proton or sodium gradient. F-type ATPases consist of two structural domains, F(1) containing the extramembraneous catalytic core and F(0) containing the membrane proton channel, linked together by a central stalk and a peripheral stalk. During catalysis, ATP synthesis in the catalytic domain of F(1) is coupled via a rotary mechanism of the central stalk subunits to proton translocation. Functionally, this protein is part of the stalk that links CF(0) to CF(1). It either transmits conformational changes from CF(0) to CF(1) or is implicated in proton conduction. This Synechococcus sp. (strain CC9311) protein is ATP synthase subunit delta.